The following is a 65-amino-acid chain: Large ribosomal subunit protein uL29 (65 aa).

Belongs to the universal ribosomal protein uL29 family.

The protein is Large ribosomal subunit protein uL29 of Acinetobacter baumannii (strain AB307-0294).